The primary structure comprises 86 residues: Large ribosomal subunit protein bL27 (86 aa).

The interval 1–24 (MAHKKGTGSTRNGRDSNSKRLGVK) is disordered.

Belongs to the bacterial ribosomal protein bL27 family.

This is Large ribosomal subunit protein bL27 from Prochlorococcus marinus (strain MIT 9312).